The chain runs to 178 residues: Bifunctional protein PyrR (178 aa).

The PRPP-binding signature appears at 99–111 (IIIIDDVLYTCRT).

Belongs to the purine/pyrimidine phosphoribosyltransferase family. PyrR subfamily. As to quaternary structure, homodimer and homohexamer; in equilibrium.

It catalyses the reaction UMP + diphosphate = 5-phospho-alpha-D-ribose 1-diphosphate + uracil. Its function is as follows. Regulates transcriptional attenuation of the pyrimidine nucleotide (pyr) operon by binding in a uridine-dependent manner to specific sites on pyr mRNA. This disrupts an antiterminator hairpin in the RNA and favors formation of a downstream transcription terminator, leading to a reduced expression of downstream genes. Functionally, also displays a weak uracil phosphoribosyltransferase activity which is not physiologically significant. The chain is Bifunctional protein PyrR from Clostridium beijerinckii (strain ATCC 51743 / NCIMB 8052) (Clostridium acetobutylicum).